The chain runs to 279 residues: ATP-dependent Clp protease proteolytic subunit-related protein 2, chloroplastic (279 aa).

Residues 1–54 constitute a chloroplast transit peptide; sequence MAVSFNTTLHQPSLSPSCSIKLYSGLKPQSASFLASGYQNLNKEFYGRVYKSLQ.

Belongs to the peptidase S14 family. In terms of assembly, component of the chloroplastic Clp protease core complex which consist of at least 16 proteins: CLPP4 (3 copies), CLPP5 (3 copies), CLPR4 (2 copies), ClpP1 (1 copy), CLPP6 (1 copy), CLPR2 (1 copy), CLPT1 (1 copy), CLPT2 (1 copy) and 3 copies of CLPP3 and/or CLPR1 and/or CLPR3. The core complex is organized in two heptameric rings, one containing CLPP3,4,5,6 in a 1:2:3:1 ratio and the other CLPP1 and CLPR1,2,3,4 in a 3:1:1:1:1 ratio. As to expression, expressed at least in leaves and roots.

Its subcellular location is the plastid. The protein localises to the chloroplast. In terms of biological role, required for chloroplast development and integrity. Involved in the regulation of plastoglobules formation. The polypeptide is ATP-dependent Clp protease proteolytic subunit-related protein 2, chloroplastic (Arabidopsis thaliana (Mouse-ear cress)).